Here is a 267-residue protein sequence, read N- to C-terminus: Tryptophan synthase alpha chain (267 aa).

Residues Glu-49 and Asp-60 each act as proton acceptor in the active site.

This sequence belongs to the TrpA family. Tetramer of two alpha and two beta chains.

The enzyme catalyses (1S,2R)-1-C-(indol-3-yl)glycerol 3-phosphate + L-serine = D-glyceraldehyde 3-phosphate + L-tryptophan + H2O. Its pathway is amino-acid biosynthesis; L-tryptophan biosynthesis; L-tryptophan from chorismate: step 5/5. Functionally, the alpha subunit is responsible for the aldol cleavage of indoleglycerol phosphate to indole and glyceraldehyde 3-phosphate. This chain is Tryptophan synthase alpha chain, found in Acinetobacter baumannii (strain AB307-0294).